A 358-amino-acid chain; its full sequence is UPF0421 protein BT9727_2513 (358 aa).

4 consecutive transmembrane segments (helical) span residues 19–39, 74–94, 109–129, and 131–151; these read IAVFLTVLVCEFFNIPTIFAV, FTFFLGHQALSYALAAMFTIV, TLTAVAMIPITADHYFTAFLI, and LATTSTGIIVSTVVNFFILPP.

Belongs to the UPF0421 family.

It localises to the cell membrane. The chain is UPF0421 protein BT9727_2513 from Bacillus thuringiensis subsp. konkukian (strain 97-27).